The following is a 327-amino-acid chain: Probable cell division protein WhiA (327 aa).

The H-T-H motif DNA-binding region spans 275-308; that stretch reads SLEELGQLADPPMTKDAVAGRIRRLLSMADRRAR.

The protein belongs to the WhiA family.

Involved in cell division and chromosome segregation. The sequence is that of Probable cell division protein WhiA from Nocardia farcinica (strain IFM 10152).